The following is a 319-amino-acid chain: Lipoyl synthase (319 aa).

A compositionally biased stretch (polar residues) spans 1–12; the sequence is MVTIVDTLSNTP. The tract at residues 1-32 is disordered; sequence MVTIVDTLSNTPLRPRHPEKANRPDSISPAKP. The [4Fe-4S] cluster site is built by Cys-61, Cys-66, Cys-72, Cys-87, Cys-91, Cys-94, and Ser-300. The 217-residue stretch at 73 to 289 folds into the Radical SAM core domain; it reads WDKKHATFMI…ETVAYTKGFL (217 aa).

Belongs to the radical SAM superfamily. Lipoyl synthase family. [4Fe-4S] cluster is required as a cofactor.

It localises to the cytoplasm. It carries out the reaction [[Fe-S] cluster scaffold protein carrying a second [4Fe-4S](2+) cluster] + N(6)-octanoyl-L-lysyl-[protein] + 2 oxidized [2Fe-2S]-[ferredoxin] + 2 S-adenosyl-L-methionine + 4 H(+) = [[Fe-S] cluster scaffold protein] + N(6)-[(R)-dihydrolipoyl]-L-lysyl-[protein] + 4 Fe(3+) + 2 hydrogen sulfide + 2 5'-deoxyadenosine + 2 L-methionine + 2 reduced [2Fe-2S]-[ferredoxin]. The protein operates within protein modification; protein lipoylation via endogenous pathway; protein N(6)-(lipoyl)lysine from octanoyl-[acyl-carrier-protein]: step 2/2. Functionally, catalyzes the radical-mediated insertion of two sulfur atoms into the C-6 and C-8 positions of the octanoyl moiety bound to the lipoyl domains of lipoate-dependent enzymes, thereby converting the octanoylated domains into lipoylated derivatives. This Bradyrhizobium sp. (strain BTAi1 / ATCC BAA-1182) protein is Lipoyl synthase.